Consider the following 147-residue polypeptide: Endoribonuclease YbeY (147 aa).

Residues H109, H113, and H119 each coordinate Zn(2+).

The protein belongs to the endoribonuclease YbeY family. Zn(2+) serves as cofactor.

Its subcellular location is the cytoplasm. Single strand-specific metallo-endoribonuclease involved in late-stage 70S ribosome quality control and in maturation of the 3' terminus of the 16S rRNA. In Thiobacillus denitrificans (strain ATCC 25259 / T1), this protein is Endoribonuclease YbeY.